The chain runs to 254 residues: Type III pantothenate kinase (254 aa).

6 to 13 (DVGNSNIV) provides a ligand contact to ATP. Substrate-binding positions include Y100 and 107–110 (GADR). D109 acts as the Proton acceptor in catalysis. Residue D129 coordinates K(+). ATP is bound at residue T132. Residue T184 coordinates substrate.

This sequence belongs to the type III pantothenate kinase family. Homodimer. NH4(+) is required as a cofactor. K(+) serves as cofactor.

The protein resides in the cytoplasm. It catalyses the reaction (R)-pantothenate + ATP = (R)-4'-phosphopantothenate + ADP + H(+). The protein operates within cofactor biosynthesis; coenzyme A biosynthesis; CoA from (R)-pantothenate: step 1/5. Its function is as follows. Catalyzes the phosphorylation of pantothenate (Pan), the first step in CoA biosynthesis. The polypeptide is Type III pantothenate kinase (Geobacter sp. (strain M21)).